A 283-amino-acid polypeptide reads, in one-letter code: uncharacterized protein (283 aa).

This is an uncharacterized protein from Acanthamoeba polyphaga mimivirus (APMV).